A 215-amino-acid chain; its full sequence is UPF0502 protein YceH (215 aa).

Lysine 80 carries the N6-acetyllysine modification.

The protein belongs to the UPF0502 family.

This chain is UPF0502 protein YceH, found in Escherichia coli O45:K1 (strain S88 / ExPEC).